We begin with the raw amino-acid sequence, 320 residues long: ATP-dependent 6-phosphofructokinase (320 aa).

Gly12 provides a ligand contact to ATP. Residues 22 to 26 and 55 to 60 contribute to the ADP site; these read RGVVR and RYSVSD. Residues 73 to 74 and 103 to 106 contribute to the ATP site; these read RF and GDGS. A Mg(2+)-binding site is contributed by Asp104. Residue 126–128 participates in substrate binding; sequence TID. Catalysis depends on Asp128, which acts as the Proton acceptor. Arg155 contacts ADP. Residues Arg163 and 170 to 172 each bind substrate; that span reads MGR. Residues 186-188, Lys212, and 214-216 contribute to the ADP site; these read GCE and KKH. Residues Glu223, Arg244, and 250-253 contribute to the substrate site; that span reads HIQR.

This sequence belongs to the phosphofructokinase type A (PFKA) family. ATP-dependent PFK group I subfamily. Prokaryotic clade 'B1' sub-subfamily. As to quaternary structure, homotetramer. Mg(2+) serves as cofactor.

It localises to the cytoplasm. The enzyme catalyses beta-D-fructose 6-phosphate + ATP = beta-D-fructose 1,6-bisphosphate + ADP + H(+). It functions in the pathway carbohydrate degradation; glycolysis; D-glyceraldehyde 3-phosphate and glycerone phosphate from D-glucose: step 3/4. Its activity is regulated as follows. Allosterically activated by ADP and other diphosphonucleosides, and allosterically inhibited by phosphoenolpyruvate. Catalyzes the phosphorylation of D-fructose 6-phosphate to fructose 1,6-bisphosphate by ATP, the first committing step of glycolysis. In Cronobacter sakazakii (strain ATCC BAA-894) (Enterobacter sakazakii), this protein is ATP-dependent 6-phosphofructokinase.